Reading from the N-terminus, the 687-residue chain is POZ (BTB) and AT hook-containing zinc finger 1 (687 aa).

One can recognise a BTB domain in the interval 41–130 (CDVLLRVGDE…AYTSRIVVRL (90 aa)). A compositionally biased stretch (polar residues) spans 250-260 (PFPNVASSAPP). Residues 250 to 279 (PFPNVASSAPPLTSKRGRGRPRKANLLDSM) form a disordered region. Residues 292 to 314 (LPCGLCGKVFTDANRLRQHEAQH) form a C2H2-type 1 zinc finger. Residues 332 to 351 (GENGLPISEDPDGPRKRSRT) form a disordered region. 5 consecutive C2H2-type zinc fingers follow at residues 355 to 377 (VACE…KLSH), 383 to 405 (YSCP…VRSH), 413 to 436 (YICQ…KQVH), 442 to 464 (HKCQ…LACH), and 495 to 517 (NFCS…VKTH). The segment at 564 to 587 (SYGDLSDASDLKTPEKQSANGSFS) is disordered. The C2H2-type 7 zinc finger occupies 605 to 628 (YPCPECGSFFRSKSYLNKHIQKVH).

As to quaternary structure, homodimer. Interacts with RNF4. Interacts (via C-terminus) with TP53; this interaction inhibits TP53 ability to activate transcription. In terms of tissue distribution, widely expressed at high levels during embryogenesis, especially in the central nervous system, especially to the actively proliferating neuroblasts in the periventricular neocortical neuroepithelium, in the telencephalic cortical plate and in the hippocampus. Also expressed in a stage-specific manner in the mouse germinal epithelium. While strongly expressed during brain development,m its expression turns down in adult brain.

It is found in the nucleus. Transcriptional regulator that plays a role in many biological processes such as embryogenesis, senescence, T-cell development or neurogenesis. Interacts with the TP53 protein to control genes that are important in proliferation and in the DNA-damage response. Mechanistically, the interaction inhibits the DNA binding and transcriptional activity of TP53/p53. Part of the transcriptional network modulating regulatory T-cell development and controls the generation of the regulatory T-cell pool under homeostatic conditions. The sequence is that of POZ (BTB) and AT hook-containing zinc finger 1 from Mus musculus (Mouse).